A 355-amino-acid polypeptide reads, in one-letter code: Gibberellin 3-beta-dioxygenase 4 (355 aa).

Residues 203–303 (GRGAIRLNHY…RISIAYLWGG (101 aa)) enclose the Fe2OG dioxygenase domain. His-227, Asp-229, and His-284 together coordinate Fe cation. Residue Arg-294 is part of the active site.

The protein belongs to the iron/ascorbate-dependent oxidoreductase family. GA3OX subfamily. It depends on L-ascorbate as a cofactor. Fe cation is required as a cofactor. In terms of tissue distribution, expressed in siliques and in seeds, specifically at the rim of the embryo and the outer integument. Also expressed in flowers. Not detected in roots, stems and leaves.

The catalysed reaction is gibberellin A20 + 2-oxoglutarate + O2 = gibberellin A1 + succinate + CO2. It participates in plant hormone biosynthesis; gibberellin biosynthesis. Its function is as follows. Converts the inactive gibberellin (GA) precursors GA9 and GA20 in the bioactives gibberellins GA4 and GA1. Involved in the production of bioactive GA for reproductive development. This is Gibberellin 3-beta-dioxygenase 4 from Arabidopsis thaliana (Mouse-ear cress).